We begin with the raw amino-acid sequence, 137 residues long: MTLTVRVISPDKTVWDAPAEEVVLPSTTGQLGILTGHAPLLTALDTGVMRVRAAKNQNWEAIALLGGFAEVEENEVTILVNGAERGDKINLEEARAAYNKAEAGLNQVSSEDRQAQIKANQAFKRARARFQAAGGLV.

This sequence belongs to the ATPase epsilon chain family. F-type ATPases have 2 components, CF(1) - the catalytic core - and CF(0) - the membrane proton channel. CF(1) has five subunits: alpha(3), beta(3), gamma(1), delta(1), epsilon(1). CF(0) has three main subunits: a, b and c.

It localises to the cellular thylakoid membrane. In terms of biological role, produces ATP from ADP in the presence of a proton gradient across the membrane. The protein is ATP synthase epsilon chain of Nostoc punctiforme (strain ATCC 29133 / PCC 73102).